Here is a 177-residue protein sequence, read N- to C-terminus: Large ribosomal subunit protein uL6 (177 aa).

It belongs to the universal ribosomal protein uL6 family. In terms of assembly, part of the 50S ribosomal subunit.

In terms of biological role, this protein binds to the 23S rRNA, and is important in its secondary structure. It is located near the subunit interface in the base of the L7/L12 stalk, and near the tRNA binding site of the peptidyltransferase center. This is Large ribosomal subunit protein uL6 from Salmonella arizonae (strain ATCC BAA-731 / CDC346-86 / RSK2980).